The primary structure comprises 257 residues: uncharacterized protein (257 aa).

A run of 6 helical transmembrane segments spans residues 23–43 (VLTD…EGLL), 79–99 (FIFI…VLGA), 131–151 (TFGI…AFSV), 158–178 (FAVS…ILMM), 199–219 (AFVL…HYEM), and 221–241 (HSVF…IHYI).

Belongs to the TerC family.

The protein localises to the cell membrane. This is an uncharacterized protein from Bacillus subtilis (strain 168).